The following is a 282-amino-acid chain: Exo-glucosaminidase LytG (282 aa).

The signal sequence occupies residues 1-29 (MARKKLKKRKLLISLFFLVSIPLALFVLA). The 79-residue stretch at 203–281 (SLKSVDLNAS…DDSAVEIKEA (79 aa)) folds into the GW domain.

Belongs to the glycosyl hydrolase 73 family. It depends on Mg(2+) as a cofactor.

Its subcellular location is the secreted. It is found in the cell wall. With respect to regulation, inhibited by EDTA. In terms of biological role, is the major glucosaminidase responsible for peptidoglycan structural determination during vegetative growth. Catalyzes the hydrolysis of 1,4-beta-linkages between N-acetyl-D-glucosamine and N-acetylmuramic acid residues in peptidoglycan. Acts processively from the ends of the glycan strands. Also plays a role in motility, chemotaxis and cell division. This is Exo-glucosaminidase LytG (lytG) from Bacillus subtilis (strain 168).